A 224-amino-acid polypeptide reads, in one-letter code: Redox-sensing transcriptional repressor Rex (224 aa).

A DNA-binding region (H-T-H motif) is located at residues 17–56 (RYHRCLEELLKNDIKRISSKELSERMGVTASQIRQDLNNF). 91–96 (GAGNLG) contributes to the NAD(+) binding site.

The protein belongs to the transcriptional regulatory Rex family. As to quaternary structure, homodimer.

The protein resides in the cytoplasm. Modulates transcription in response to changes in cellular NADH/NAD(+) redox state. This Caldanaerobacter subterraneus subsp. tengcongensis (strain DSM 15242 / JCM 11007 / NBRC 100824 / MB4) (Thermoanaerobacter tengcongensis) protein is Redox-sensing transcriptional repressor Rex.